Reading from the N-terminus, the 208-residue chain is GTP-binding protein Rho1 (208 aa).

19-26 (GDGACGKT) provides a ligand contact to GTP. The Effector region motif lies at 41–49 (YVPTVFDNY). Residues 66-70 (DTAGQ) and 124-127 (CKAD) contribute to the GTP site. Residues 188–208 (GKQGKSKPKTKSSKKKKCVVL) are disordered. The span at 191 to 208 (GKSKPKTKSSKKKKCVVL) shows a compositional bias: basic residues. Cysteine 205 carries the cysteine methyl ester modification. Cysteine 205 carries S-geranylgeranyl cysteine lipidation. Positions 206-208 (VVL) are cleaved as a propeptide — removed in mature form.

This sequence belongs to the small GTPase superfamily. Rho family.

The protein resides in the cell membrane. The protein is GTP-binding protein Rho1 (RHO1) of Kluyveromyces lactis (strain ATCC 8585 / CBS 2359 / DSM 70799 / NBRC 1267 / NRRL Y-1140 / WM37) (Yeast).